The sequence spans 227 residues: Adenylate kinase (227 aa).

21 to 26 contributes to the ATP binding site; that stretch reads GAGKGT. The segment at 41–70 is NMP; that stretch reads ATGDMLRSQVAKQTPLGIEAKKIMDDGKLV. AMP-binding positions include Thr42, Arg47, 68–70, 97–100, and Gln104; these read KLV and GFPR. Residues 138–175 form an LID region; sequence GRLVHPASGRSYHKVFNPPKTEMKDDITGEDLVQRSDD. ATP contacts are provided by residues Arg139 and 148 to 149; that span reads SY. AMP is bound by residues Arg172 and Arg183. Residue Gln211 participates in ATP binding.

The protein belongs to the adenylate kinase family. AK2 subfamily. As to quaternary structure, monomer.

It localises to the cytoplasm. It is found in the cytosol. Its subcellular location is the mitochondrion intermembrane space. The catalysed reaction is AMP + ATP = 2 ADP. Its function is as follows. Catalyzes the reversible transfer of the terminal phosphate group between ATP and AMP. Plays an important role in cellular energy homeostasis and in adenine nucleotide metabolism. Adenylate kinase activity is critical for regulation of the phosphate utilization and the AMP de novo biosynthesis pathways. This is Adenylate kinase from Kluyveromyces lactis (strain ATCC 8585 / CBS 2359 / DSM 70799 / NBRC 1267 / NRRL Y-1140 / WM37) (Yeast).